The chain runs to 399 residues: La protein 2 (399 aa).

In terms of domain architecture, HTH La-type RNA-binding spans 3-106; the sequence is SSFNEETAKK…GRGTKLSKPE (104 aa). Residues 115 to 192 enclose the RRM domain; that stretch reads RTLAASPFEY…ADLVLIPKSD (78 aa). The xRRM domain maps to 269–399; sequence SLCKDNTDQL…QPTKKARKEP (131 aa). The disordered stretch occupies residues 367 to 399; the sequence is AELEGGKEGHKKEKGKDECFENVQPTKKARKEP. Over residues 370 to 385 the composition is skewed to basic and acidic residues; it reads EGGKEGHKKEKGKDEC.

Expressed ubiquitously (at protein level).

It is found in the nucleus. It localises to the nucleoplasm. The protein localises to the nucleolus. In terms of biological role, binds to the 3' poly(U) terminus of nascent RNA polymerase III transcripts, protecting them from exonuclease digestion and facilitating their folding and maturation. This chain is La protein 2 (LA2), found in Arabidopsis thaliana (Mouse-ear cress).